A 366-amino-acid polypeptide reads, in one-letter code: 1-deoxy-D-xylulose 5-phosphate reductoisomerase (366 aa).

Residues Thr-7, Gly-8, Ser-9, Ile-10, Gly-31, Lys-32, Asn-33, and Asn-113 each contribute to the NADPH site. 1-deoxy-D-xylulose 5-phosphate is bound at residue Lys-114. Residue Glu-115 participates in NADPH binding. Asp-133 provides a ligand contact to Mn(2+). Residues Ser-134, Glu-135, Ser-158, and His-181 each contribute to the 1-deoxy-D-xylulose 5-phosphate site. A Mn(2+)-binding site is contributed by Glu-135. Gly-187 provides a ligand contact to NADPH. 1-deoxy-D-xylulose 5-phosphate contacts are provided by Ser-194, Asn-199, Lys-200, and Glu-203. Glu-203 serves as a coordination point for Mn(2+).

Belongs to the DXR family. It depends on Mg(2+) as a cofactor. The cofactor is Mn(2+).

The catalysed reaction is 2-C-methyl-D-erythritol 4-phosphate + NADP(+) = 1-deoxy-D-xylulose 5-phosphate + NADPH + H(+). It functions in the pathway isoprenoid biosynthesis; isopentenyl diphosphate biosynthesis via DXP pathway; isopentenyl diphosphate from 1-deoxy-D-xylulose 5-phosphate: step 1/6. In terms of biological role, catalyzes the NADPH-dependent rearrangement and reduction of 1-deoxy-D-xylulose-5-phosphate (DXP) to 2-C-methyl-D-erythritol 4-phosphate (MEP). The polypeptide is 1-deoxy-D-xylulose 5-phosphate reductoisomerase (Helicobacter pylori (strain G27)).